A 379-amino-acid chain; its full sequence is Lipid-A-disaccharide synthase (379 aa).

The protein belongs to the LpxB family.

The enzyme catalyses a lipid X + a UDP-2-N,3-O-bis[(3R)-3-hydroxyacyl]-alpha-D-glucosamine = a lipid A disaccharide + UDP + H(+). It functions in the pathway bacterial outer membrane biogenesis; LPS lipid A biosynthesis. Its function is as follows. Condensation of UDP-2,3-diacylglucosamine and 2,3-diacylglucosamine-1-phosphate to form lipid A disaccharide, a precursor of lipid A, a phosphorylated glycolipid that anchors the lipopolysaccharide to the outer membrane of the cell. This chain is Lipid-A-disaccharide synthase, found in Vibrio campbellii (strain ATCC BAA-1116).